The chain runs to 283 residues: Protein ATAF2 (283 aa).

An NAC domain is found at 7–159 (LPAGFRFHPT…DWVLCRIYNK (153 aa)). Residues 103–165 (LGIKKALVFY…IYNKKGTMEK (63 aa)) mediate DNA binding. The disordered stretch occupies residues 171 to 211 (EKPRTTTMAEQSSSPFDTSDSTYPTLQEDDSSSSGGHGHVV). The span at 175-195 (TTTMAEQSSSPFDTSDSTYPT) shows a compositional bias: polar residues.

Homodimer. Interacts with AHK2. Interacts with AHL12 and AHL27. Interacts with the helicase domain of the tobamovirus (TMV) replicase. In terms of tissue distribution, expressed in roots, cotyledons, rosette leaves, cauline leaves and mature flowers. Expressed at low levels in stems and flower buds.

The protein localises to the nucleus. Its function is as follows. Involved in disease resistance response. May function as repressor of pathogenesis-related proteins. May function in the regulation of host basal defense responses against viral infection. Transcriptional activator involved in responses to wounding and infection with tobamovirus (TMV). Binds to the DNA sequences 5'-AAAATATCT-3' and 5'AGATTTTT-3' of CYP734A1/BAS1 and CYP72C1/SOB7 promoters, respectively. Acts as a suppressor of the brassinosteroid (BR)-inactivating enzymes CYP734A1/BAS1 and CYP72C1/SOB7, and prevents their expression in almost all tissues. Plays a central role in integrating BR homeostasis and seedling development. Regulates the spatial regulation of BR homeostasis and participates in the regulation of hypocotyl elongation and root growth by suppressing BR catabolism. Mediates connection between BR catabolism and photomorphogenesis. Binds to, and transactivates the promoter of the auxin biosynthetic gene NIT2. Stress-responsive NAC transcription factor involved in ABA-inducible leaf senescence signaling. Required for normal seed development and morphology. In Arabidopsis thaliana (Mouse-ear cress), this protein is Protein ATAF2 (NAC081).